Reading from the N-terminus, the 318-residue chain is Olfactory receptor 13C9 (318 aa).

At 1–25 the chain is on the extracellular side; that stretch reads MEWENQTILVEFFLKGHSVHPRLEL. Residue Asn5 is glycosylated (N-linked (GlcNAc...) asparagine). A helical transmembrane segment spans residues 26 to 46; it reads LFFVLIFIMYVVILLGNGTLI. Residues 47–54 lie on the Cytoplasmic side of the membrane; it reads LISILDPH. Residues 55-75 form a helical membrane-spanning segment; it reads LHTPMYFFLGNLSFLDICYTT. Residues 76–99 lie on the Extracellular side of the membrane; the sequence is TSIPSTLVSFLSERKTISFSGCAV. Cys97 and Cys189 form a disulfide bridge. Residues 100 to 120 traverse the membrane as a helical segment; sequence QMFLGLAMGTTECVLLGMMAF. Over 121 to 139 the chain is Cytoplasmic; sequence DRYVAICNPLRYPIIMSKN. A helical transmembrane segment spans residues 140 to 160; it reads AYVPMAVGSWFAGIVNSAVQT. Residues 161 to 197 are Extracellular-facing; that stretch reads TFVVQLPFCRKNVINHFSCEILAVMKLACADISGNEF. The helical transmembrane segment at 198-217 threads the bilayer; it reads LMLVATILFTLMPLLLIVIS. The Cytoplasmic segment spans residues 218–237; that stretch reads YSLIISSILKIHSSEGRSKA. The helical transmembrane segment at 238 to 258 threads the bilayer; the sequence is FSTCSAHLTVVIIFYGTILFM. The Extracellular segment spans residues 259 to 277; the sequence is YMKPKSKETLNSDDLDATD. A helical membrane pass occupies residues 278–298; it reads KIISMFYGVMTPMMNPLIYSL. The Cytoplasmic portion of the chain corresponds to 299-318; the sequence is RNKDVKEAVKHLPNRRFFSK.

This sequence belongs to the G-protein coupled receptor 1 family.

The protein localises to the cell membrane. Its function is as follows. Odorant receptor. In Homo sapiens (Human), this protein is Olfactory receptor 13C9 (OR13C9).